A 157-amino-acid polypeptide reads, in one-letter code: Probable succinate transporter subunit YjjB (157 aa).

4 helical membrane-spanning segments follow: residues 2-22 (GIIS…IPAV), 55-75 (AGFN…SIGI), 87-107 (IFTV…TAMI), and 129-149 (FLKA…PGLW).

Belongs to the ThrE exporter (TC 2.A.79) family. In terms of assembly, the transporter is composed of YjjB and YjjP.

The protein resides in the cell inner membrane. Its function is as follows. Involved in succinate export with YjjP. Both proteins are required for export. This is Probable succinate transporter subunit YjjB from Klebsiella pneumoniae subsp. pneumoniae (strain ATCC 700721 / MGH 78578).